The primary structure comprises 32 residues: MIKKLTHATIWFLYSNYINYKLYLVLIIYQKS.

This is an uncharacterized protein from Mastigocladus laminosus (Fischerella sp.).